The chain runs to 246 residues: Small ribosomal subunit protein uS2 (246 aa).

Belongs to the universal ribosomal protein uS2 family.

This is Small ribosomal subunit protein uS2 from Dictyoglomus thermophilum (strain ATCC 35947 / DSM 3960 / H-6-12).